We begin with the raw amino-acid sequence, 156 residues long: ATP synthase subunit b (156 aa).

Residues leucine 7–proline 27 form a helical membrane-spanning segment.

This sequence belongs to the ATPase B chain family. F-type ATPases have 2 components, F(1) - the catalytic core - and F(0) - the membrane proton channel. F(1) has five subunits: alpha(3), beta(3), gamma(1), delta(1), epsilon(1). F(0) has three main subunits: a(1), b(2) and c(10-14). The alpha and beta chains form an alternating ring which encloses part of the gamma chain. F(1) is attached to F(0) by a central stalk formed by the gamma and epsilon chains, while a peripheral stalk is formed by the delta and b chains.

The protein localises to the cell inner membrane. F(1)F(0) ATP synthase produces ATP from ADP in the presence of a proton or sodium gradient. F-type ATPases consist of two structural domains, F(1) containing the extramembraneous catalytic core and F(0) containing the membrane proton channel, linked together by a central stalk and a peripheral stalk. During catalysis, ATP synthesis in the catalytic domain of F(1) is coupled via a rotary mechanism of the central stalk subunits to proton translocation. Its function is as follows. Component of the F(0) channel, it forms part of the peripheral stalk, linking F(1) to F(0). The polypeptide is ATP synthase subunit b (Paraburkholderia xenovorans (strain LB400)).